The sequence spans 445 residues: Inward rectifier potassium channel 4 (445 aa).

Residues 1-55 lie on the Cytoplasmic side of the membrane; it reads MHGHSRNGQAHVPRRKRRNRFVKKNGQCNVYFANLSNKSQRYMADIFTTCVDTRW. The chain crosses the membrane as a helical span at residues 56 to 80; that stretch reads RYMLMIFSAAFLVSWLFFGLLFWCI. The Extracellular portion of the chain corresponds to 81–120; sequence AFFHGDLEASPGVPAAGGPAAGGGGAAPVAPKPCIMHVNG. A val/Gly/Ala/Pro stretch region spans residues 91–111; the sequence is PGVPAAGGPAAGGGGAAPVAP. The segment at residues 121–132 is an intramembrane region (helical; Pore-forming); the sequence is FLGAFLFSVETQ. Positions 133–139 form an intramembrane region, pore-forming; the sequence is TTIGYGF. The short motif at 134-139 is the Selectivity filter element; it reads TIGYGF. Residues 140 to 148 are Extracellular-facing; the sequence is RCVTEECPL. A helical transmembrane segment spans residues 149–170; sequence AVIAVVVQSIVGCVIDSFMIGT. Over 171 to 445 the chain is Cytoplasmic; sequence IMAKMARPKK…NISYRRESAI (275 aa). The short motif at 443–445 is the PDZ-binding element; the sequence is SAI.

The protein belongs to the inward rectifier-type potassium channel (TC 1.A.2.1) family. KCNJ4 subfamily. Homomultimeric and heteromultimeric association with KCNJ2 and KCNJ12. Interacts with DLG2 and DLG4. Associates, via its PDZ-recognition domain, with a complex containing LIN7A, LIN7B, LIN7C, DLG1, CASK and APBA1. Interacts with TAX1BP3. TAX1BP3 competes with LIN7 family members for KCNJ4 binding. As to expression, heart, skeletal muscle, and several different brain regions including the hippocampus.

It is found in the cell membrane. The protein localises to the postsynaptic cell membrane. It localises to the cytoplasmic vesicle membrane. It catalyses the reaction K(+)(in) = K(+)(out). Functionally, inward rectifier potassium channels are characterized by a greater tendency to allow potassium to flow into the cell rather than out of it. Their voltage dependence is regulated by the concentration of extracellular potassium; as external potassium is raised, the voltage range of the channel opening shifts to more positive voltages. The inward rectification is mainly due to the blockage of outward current by internal magnesium. Can be blocked by extracellular barium and cesium. In Homo sapiens (Human), this protein is Inward rectifier potassium channel 4 (KCNJ4).